The primary structure comprises 365 residues: Histidinol-phosphate aminotransferase (365 aa).

An N6-(pyridoxal phosphate)lysine modification is found at Lys223.

It belongs to the class-II pyridoxal-phosphate-dependent aminotransferase family. Histidinol-phosphate aminotransferase subfamily. Homodimer. The cofactor is pyridoxal 5'-phosphate.

It carries out the reaction L-histidinol phosphate + 2-oxoglutarate = 3-(imidazol-4-yl)-2-oxopropyl phosphate + L-glutamate. It functions in the pathway amino-acid biosynthesis; L-histidine biosynthesis; L-histidine from 5-phospho-alpha-D-ribose 1-diphosphate: step 7/9. This is Histidinol-phosphate aminotransferase from Brucella melitensis biotype 1 (strain ATCC 23456 / CCUG 17765 / NCTC 10094 / 16M).